The following is a 334-amino-acid chain: Fructose-1,6-bisphosphatase class 1 (334 aa).

Residues glutamate 91, aspartate 113, leucine 115, and aspartate 116 each coordinate Mg(2+). Substrate is bound by residues 116–119 (DGSS), asparagine 208, and lysine 274. Glutamate 280 lines the Mg(2+) pocket.

Belongs to the FBPase class 1 family. In terms of assembly, homotetramer. Mg(2+) is required as a cofactor.

It is found in the cytoplasm. The enzyme catalyses beta-D-fructose 1,6-bisphosphate + H2O = beta-D-fructose 6-phosphate + phosphate. It functions in the pathway carbohydrate biosynthesis; gluconeogenesis. This chain is Fructose-1,6-bisphosphatase class 1, found in Herminiimonas arsenicoxydans.